Here is an 865-residue protein sequence, read N- to C-terminus: Protein translocase subunit SecA (865 aa).

Residues Gln93, Gly111–Thr115, and Asp501 contribute to the ATP site. Cys841, Cys843, Cys852, and Cys853 together coordinate Zn(2+).

This sequence belongs to the SecA family. Monomer and homodimer. Part of the essential Sec protein translocation apparatus which comprises SecA, SecYEG and auxiliary proteins SecDF-YajC and YidC. Zn(2+) is required as a cofactor.

The protein resides in the cell inner membrane. It localises to the cytoplasm. The enzyme catalyses ATP + H2O + cellular proteinSide 1 = ADP + phosphate + cellular proteinSide 2.. In terms of biological role, part of the Sec protein translocase complex. Interacts with the SecYEG preprotein conducting channel. Has a central role in coupling the hydrolysis of ATP to the transfer of proteins into and across the cell membrane, serving as an ATP-driven molecular motor driving the stepwise translocation of polypeptide chains across the membrane. This chain is Protein translocase subunit SecA, found in Helicobacter pylori (strain ATCC 700392 / 26695) (Campylobacter pylori).